The primary structure comprises 723 residues: Catalase-peroxidase (723 aa).

The tryptophyl-tyrosyl-methioninium (Trp-Tyr) (with M-250) cross-link spans 96-224 (WHAAGTYRIQ…LAAVQMGLIY (129 aa)). Residue His-97 is the Proton acceptor of the active site. The tryptophyl-tyrosyl-methioninium (Tyr-Met) (with W-96) cross-link spans 224–250 (YVNPEGVNSQPDPIKTGEQVRVTFARM). His-265 contributes to the heme b binding site.

It belongs to the peroxidase family. Peroxidase/catalase subfamily. As to quaternary structure, homodimer or homotetramer. Requires heme b as cofactor. Formation of the three residue Trp-Tyr-Met cross-link is important for the catalase, but not the peroxidase activity of the enzyme.

It catalyses the reaction H2O2 + AH2 = A + 2 H2O. The enzyme catalyses 2 H2O2 = O2 + 2 H2O. Bifunctional enzyme with both catalase and broad-spectrum peroxidase activity. This is Catalase-peroxidase from Marinobacter nauticus (strain ATCC 700491 / DSM 11845 / VT8) (Marinobacter aquaeolei).